The sequence spans 131 residues: D-ribose pyranase (131 aa).

H20 serves as the catalytic Proton donor. Substrate contacts are provided by residues D28, H98, and 120–122 (YAN).

This sequence belongs to the RbsD / FucU family. RbsD subfamily. Homodecamer.

The protein localises to the cytoplasm. It carries out the reaction beta-D-ribopyranose = beta-D-ribofuranose. Its pathway is carbohydrate metabolism; D-ribose degradation; D-ribose 5-phosphate from beta-D-ribopyranose: step 1/2. In terms of biological role, catalyzes the interconversion of beta-pyran and beta-furan forms of D-ribose. The chain is D-ribose pyranase from Bacillus cereus (strain ZK / E33L).